Consider the following 272-residue polypeptide: HTH-type transcriptional repressor AllR (272 aa).

Residues 1-20 (MTEVRRRGRPGQAEPTAQKG) form a disordered region. The region spanning 21-83 (AQALERGIAI…SQLGWWHIGL (63 aa)) is the HTH iclR-type domain. Residues 43–62 (VSDISGSLDLPLSTTFRLLK) constitute a DNA-binding region (H-T-H motif). The region spanning 98–267 (VLSVAGPFMH…AKDISTALGL (170 aa)) is the IclR-ED domain. Glyoxylate-binding positions include 154 to 156 (SGA), Asp207, Cys217, and 234 to 236 (SIS).

Functionally, negative regulator of allantoin and glyoxylate utilization operons. Binds to the gcl promoter and to the allS-allA intergenic region. The protein is HTH-type transcriptional repressor AllR (allR) of Salmonella paratyphi A (strain ATCC 9150 / SARB42).